The following is a 369-amino-acid chain: Replication factor C subunit 5 (369 aa).

The interval 21–40 (INKGKDVVGFGPPPQSKATP) is disordered. Residue 79–86 (GPPGTGKT) participates in ATP binding.

It belongs to the activator 1 small subunits family. Heterotetramer of subunits RFC2, RFC3, RFC4 and RFC5 that can form a complex with RFC1.

It localises to the nucleus. Its function is as follows. Functions in cell replication and proliferation. May be involved in chromatin assembly and remodeling. Plays a role in the negative control of pathogenesis-related gene expression and systemic acquired resistance (SAR). The chain is Replication factor C subunit 5 (RFC5) from Arabidopsis thaliana (Mouse-ear cress).